Consider the following 350-residue polypeptide: GTPase Obg (350 aa).

The 159-residue stretch at 1–159 (MRFIDQTEIF…FRLHLELKLL (159 aa)) folds into the Obg domain. Positions 160 to 328 (AEVGIIGLPN…LLQQVWEELD (169 aa)) constitute an OBG-type G domain. GTP-binding positions include 166–173 (GLPNAGKS), 191–195 (FTTLI), 213–216 (DIPG), 280–283 (NKID), and 309–311 (SAV). Positions 173 and 193 each coordinate Mg(2+).

The protein belongs to the TRAFAC class OBG-HflX-like GTPase superfamily. OBG GTPase family. In terms of assembly, monomer. Mg(2+) serves as cofactor.

The protein resides in the cytoplasm. In terms of biological role, an essential GTPase which binds GTP, GDP and possibly (p)ppGpp with moderate affinity, with high nucleotide exchange rates and a fairly low GTP hydrolysis rate. Plays a role in control of the cell cycle, stress response, ribosome biogenesis and in those bacteria that undergo differentiation, in morphogenesis control. The protein is GTPase Obg of Acaryochloris marina (strain MBIC 11017).